We begin with the raw amino-acid sequence, 108 residues long: Type III secretion system chaperone SseA (108 aa).

The stretch at 69-97 (NQEAEKDLKKIVSLFKQLEVRLKQLNAQA) forms a coiled coil.

Binds to SseB and SseD.

It localises to the cytoplasm. Its function is as follows. Functions as a type III secretion system (T3SS) chaperone, which is required for SseB and SseD accumulation and secretion. May have a direct role in secretion of SseB and SseD, or may facilitate their correct folding, for efficient secretion and function. Required for survival and replication within epithelial cells and macrophages. This Salmonella typhimurium (strain LT2 / SGSC1412 / ATCC 700720) protein is Type III secretion system chaperone SseA (sseA).